A 485-amino-acid chain; its full sequence is Noelin (485 aa).

An N-terminal signal peptide occupies residues 1–16; it reads MSVPLLKIGVVLSTMA. 8 N-linked (GlcNAc...) asparagine glycosylation sites follow: Asn33, Asn103, Asn187, Asn288, Asn307, Asn394, Asn431, and Asn473. A coiled-coil region spans residues 87 to 225; it reads RDARTKQLRQ…ERLRACMQKL (139 aa). The region spanning 226 to 478 is the Olfactomedin-like domain; it reads ACGKLTGISD…QILYNVTLFH (253 aa). Cys227 and Cys409 form a disulfide bridge.

As to quaternary structure, homotetramer; disulfide-linked. Dimer of dimers, giving rise to a V-shaped homotretramer. Isoform 1 and isoform 3 interact with RTN4R. Identified in a complex with RTN4R and LINGO1. Peripherally associated with AMPAR complex. AMPAR complex consists of an inner core made of 4 pore-forming GluA/GRIA proteins (GRIA1, GRIA2, GRIA3 and GRIA4) and 4 major auxiliary subunits arranged in a twofold symmetry. One of the two pairs of distinct binding sites is occupied either by CNIH2, CNIH3 or CACNG2, CACNG3. The other harbors CACNG2, CACNG3, CACNG4, CACNG8 or GSG1L. This inner core of AMPAR complex is complemented by outer core constituents binding directly to the GluA/GRIA proteins at sites distinct from the interaction sites of the inner core constituents. Outer core constituents include at least PRRT1, PRRT2, CKAMP44/SHISA9, FRRS1L and NRN1. The proteins of the inner and outer core serve as a platform for other, more peripherally associated AMPAR constituents, including OLFM1. Alone or in combination, these auxiliary subunits control the gating and pharmacology of the AMPAR complex and profoundly impact their biogenesis and protein processing. Interacts with OLFM2.

The protein resides in the secreted. The protein localises to the synapse. Its subcellular location is the endoplasmic reticulum. It localises to the cell projection. It is found in the axon. The protein resides in the perikaryon. In terms of biological role, contributes to the regulation of axonal growth in the embryonic and adult central nervous system by inhibiting interactions between RTN4R and LINGO1. Inhibits RTN4R-mediated axon growth cone collapse. May play an important role in regulating the production of neural crest cells by the neural tube. May be required for normal responses to olfactory stimuli. The chain is Noelin (OLFM1) from Homo sapiens (Human).